A 281-amino-acid polypeptide reads, in one-letter code: 2-dehydro-3-deoxyphosphooctonate aldolase (281 aa).

It belongs to the KdsA family.

It localises to the cytoplasm. The catalysed reaction is D-arabinose 5-phosphate + phosphoenolpyruvate + H2O = 3-deoxy-alpha-D-manno-2-octulosonate-8-phosphate + phosphate. Its pathway is carbohydrate biosynthesis; 3-deoxy-D-manno-octulosonate biosynthesis; 3-deoxy-D-manno-octulosonate from D-ribulose 5-phosphate: step 2/3. It participates in bacterial outer membrane biogenesis; lipopolysaccharide biosynthesis. The sequence is that of 2-dehydro-3-deoxyphosphooctonate aldolase from Pseudomonas fluorescens (strain SBW25).